The chain runs to 387 residues: L-aspartate:5-guanidino-3-methyl-2-oxopentanoate transaminase (387 aa).

The residue at position 237 (lysine 237) is an N6-(pyridoxal phosphate)lysine.

This sequence belongs to the class-I pyridoxal-phosphate-dependent aminotransferase family. It depends on pyridoxal 5'-phosphate as a cofactor.

It catalyses the reaction (3R)-5-guanidino-3-methyl-2-oxopentanoate + L-aspartate = (3R)-3-methyl-L-arginine + oxaloacetate. It functions in the pathway antibiotic biosynthesis. In terms of biological role, aminotransferase involved in the formation of the rare amino acid 3-methylarginine (MeArg), which is used as a potent antibiotic against the closely related soybean pathogen P.syringae pv. glycinea. Probably catalyzes transamination from the donor L-aspartate to 5-guanidino-3-methyl-2-oxopentanoic acid, generating 3-methylarginine. The chain is L-aspartate:5-guanidino-3-methyl-2-oxopentanoate transaminase from Pseudomonas syringae pv. syringae.